Here is an 89-residue protein sequence, read N- to C-terminus: Small ribosomal subunit protein uS15 (89 aa).

The protein belongs to the universal ribosomal protein uS15 family. As to quaternary structure, part of the 30S ribosomal subunit. Forms a bridge to the 50S subunit in the 70S ribosome, contacting the 23S rRNA.

One of the primary rRNA binding proteins, it binds directly to 16S rRNA where it helps nucleate assembly of the platform of the 30S subunit by binding and bridging several RNA helices of the 16S rRNA. Its function is as follows. Forms an intersubunit bridge (bridge B4) with the 23S rRNA of the 50S subunit in the ribosome. This is Small ribosomal subunit protein uS15 from Chloroflexus aurantiacus (strain ATCC 29366 / DSM 635 / J-10-fl).